The sequence spans 299 residues: Sulfate adenylyltransferase subunit 2 (299 aa).

This sequence belongs to the PAPS reductase family. CysD subfamily. As to quaternary structure, sulfate-activating enzymes, NodP and NodQ, may be physically associated.

It carries out the reaction sulfate + ATP + H(+) = adenosine 5'-phosphosulfate + diphosphate. In terms of biological role, proposed to provide activated sulfate for transfer to nod factor. This is Sulfate adenylyltransferase subunit 2 (nodP) from Rhizobium sp. (strain BR816).